The primary structure comprises 313 residues: Ribosomal RNA small subunit methyltransferase H (313 aa).

S-adenosyl-L-methionine is bound by residues 33–35 (GGH), Asp53, Phe80, Asp102, and Gln109. The disordered stretch occupies residues 291–313 (SDEEMRANPRAQSAKLRAAEKIR).

This sequence belongs to the methyltransferase superfamily. RsmH family.

It localises to the cytoplasm. The enzyme catalyses cytidine(1402) in 16S rRNA + S-adenosyl-L-methionine = N(4)-methylcytidine(1402) in 16S rRNA + S-adenosyl-L-homocysteine + H(+). Functionally, specifically methylates the N4 position of cytidine in position 1402 (C1402) of 16S rRNA. The protein is Ribosomal RNA small subunit methyltransferase H of Heliobacterium modesticaldum (strain ATCC 51547 / Ice1).